The primary structure comprises 187 residues: MSTGNFDLNELKRRMQGATQALKHELGGLRTGRASASMVEPVQVEAYGSHMPLNQLATVSVPEPRLLSVQVWDRSMVKAVEKAIVDSNLGLSPATEGQVIRLRIPELNQERRKELVKVAHKYAEQARVAVRHVRRDGLDTLKKLEKNHEMSEDDQERLAGDVQKATDSVISEIDQLLAAKEKEILTV.

It belongs to the RRF family.

It localises to the cytoplasm. In terms of biological role, responsible for the release of ribosomes from messenger RNA at the termination of protein biosynthesis. May increase the efficiency of translation by recycling ribosomes from one round of translation to another. The chain is Ribosome-recycling factor from Bradyrhizobium sp. (strain ORS 278).